A 98-amino-acid chain; its full sequence is Small ribosomal subunit protein bTHXm (98 aa).

A mitochondrion-targeting transit peptide spans 1-35; the sequence is MAAMQWCGAMTRRIMMTQRTSAALNCSARYSSLSP. Residues 52-71 form a disordered region; sequence DKKTKKGKRFKGSYGNSRGK. Residues 53 to 62 show a composition bias toward basic residues; the sequence is KKTKKGKRFK.

The protein belongs to the bacterial ribosomal protein bTHX family. In terms of assembly, component of the mitochondrial ribosome small subunit.

It localises to the mitochondrion. This is Small ribosomal subunit protein bTHXm from Arabidopsis thaliana (Mouse-ear cress).